A 455-amino-acid chain; its full sequence is Folate transporter 2 (455 aa).

Transmembrane regions (helical) follow at residues 42-64 (IVVYLVGLSDGLTHLASLAIYYL), 84-103 (YIPFILKPVIALITDSFSIF), 110-131 (YLFLFSLFQSLNFLALAFLNLS), 137-157 (LILFFISLCASFCTTVAEALV), 177-195 (IASKAIGSLSVAYFSGYFL), 201-221 (EYIFIATSIFPLIISLSCLFL), 242-261 (FINTPIFLGPFLYIFVYMSG), and 281-301 (SFMGTLRLTYGIASLIGIIIY). Asn-307 is a glycosylation site (N-linked (GlcNAc...) asparagine). The next 2 helical transmembrane spans lie at 313–331 (TLIITTLVSFPIYISPIIL) and 347–367 (VLSGGFLIEAITEIQLLPLFI). An N-linked (GlcNAc...) asparagine glycan is attached at Asn-416. A helical membrane pass occupies residues 417 to 438 (LSLYILTCGFFLLFSLTLVPLL).

It belongs to the major facilitator superfamily. Folate-biopterin transporter (TC 2.A.71) family.

It localises to the cell membrane. It catalyses the reaction folate(in) + H(+)(in) = folate(out) + H(+)(out). The catalysed reaction is (6S)-5-methyl-5,6,7,8-tetrahydrofolate(in) + H(+)(in) = (6S)-5-methyl-5,6,7,8-tetrahydrofolate(out) + H(+)(out). Its activity is regulated as follows. Transport of folates is inhibited by probenecid and methotrexate. Folate transporter with broad substrate specificity. Transports folic acid, folinic acid, pteroic acid, dihydropteroic acid, the folate precursor p-amino benzoic acid (pABA) and the human folate catabolite pABA monoglutamate. Can transport 5-methyltetrahydrofolate with low efficiency. This chain is Folate transporter 2, found in Plasmodium falciparum (isolate 3D7).